The following is a 517-amino-acid chain: MAMASALRRLSSSSNKPLQRLFNGGHLYSMSSLPSEAVYEKERPGVTWPKQLNAPLEVGDPEIADIIELEKARQWKGLELILSENFTSLSVMQAVGSVMTNKYSEGYPGARYYGGNEYIDMAETLCQKRALEAFRLDAAKWGVNVQPLSGSPANFHVYTALLKAHDRIMALDLPHGGHLSHGYQTDTKKISAVSIFFETMPYRLNESTGYIDYDQLEKSATLFRPKLIVAGASAYARLYDYARIRKVCDKQKAILLADMAHISGLVAAGVIPSPFDYADVVTTTTHKSLRGPRGAMIFFRKGVKEVNKQGKEVLYDYEDKINQAVFPGLQGGPHNHTITGLAVALKQATTAEYKAYQEQVMSNCAKFAETLVKSGYELVSGGTENHLVLVNLKNKGIDGSRVEKVLEAVHIAANKNTVPGDVSAMVPGGIRMGTPALTSRGFVEEDFAKVAYLFDLAVKLAVKIKGEAQGTKLKDFVAAMQSSAFQSEISKLRHDVEEYAKQFPTIGFEKETMKYKN.

A mitochondrion-targeting transit peptide spans 1 to 31 (MAMASALRRLSSSSNKPLQRLFNGGHLYSMS). Lys287 is modified (N6-(pyridoxal phosphate)lysine).

Belongs to the SHMT family. In terms of assembly, homotetramer. It depends on pyridoxal 5'-phosphate as a cofactor.

The protein resides in the mitochondrion. The catalysed reaction is (6R)-5,10-methylene-5,6,7,8-tetrahydrofolate + glycine + H2O = (6S)-5,6,7,8-tetrahydrofolate + L-serine. The protein operates within one-carbon metabolism; tetrahydrofolate interconversion. Catalyzes the interconversion of serine and glycine. The sequence is that of Serine hydroxymethyltransferase 2, mitochondrial from Flaveria pringlei.